The chain runs to 373 residues: 4-hydroxy-3-methylbut-2-en-1-yl diphosphate synthase (flavodoxin) (373 aa).

Positions 270, 273, 305, and 312 each coordinate [4Fe-4S] cluster.

The protein belongs to the IspG family. The cofactor is [4Fe-4S] cluster.

It catalyses the reaction (2E)-4-hydroxy-3-methylbut-2-enyl diphosphate + oxidized [flavodoxin] + H2O + 2 H(+) = 2-C-methyl-D-erythritol 2,4-cyclic diphosphate + reduced [flavodoxin]. Its pathway is isoprenoid biosynthesis; isopentenyl diphosphate biosynthesis via DXP pathway; isopentenyl diphosphate from 1-deoxy-D-xylulose 5-phosphate: step 5/6. Functionally, converts 2C-methyl-D-erythritol 2,4-cyclodiphosphate (ME-2,4cPP) into 1-hydroxy-2-methyl-2-(E)-butenyl 4-diphosphate. In Sodalis glossinidius (strain morsitans), this protein is 4-hydroxy-3-methylbut-2-en-1-yl diphosphate synthase (flavodoxin).